A 123-amino-acid chain; its full sequence is Small ribosomal subunit protein uS13 (123 aa).

The disordered stretch occupies residues Gly-95–Lys-123. The span at Ala-107–Lys-123 shows a compositional bias: basic residues.

The protein belongs to the universal ribosomal protein uS13 family. As to quaternary structure, part of the 30S ribosomal subunit. Forms a loose heterodimer with protein S19. Forms two bridges to the 50S subunit in the 70S ribosome.

Its function is as follows. Located at the top of the head of the 30S subunit, it contacts several helices of the 16S rRNA. In the 70S ribosome it contacts the 23S rRNA (bridge B1a) and protein L5 of the 50S subunit (bridge B1b), connecting the 2 subunits; these bridges are implicated in subunit movement. Contacts the tRNAs in the A and P-sites. The polypeptide is Small ribosomal subunit protein uS13 (Maridesulfovibrio salexigens (strain ATCC 14822 / DSM 2638 / NCIMB 8403 / VKM B-1763) (Desulfovibrio salexigens)).